Here is a 62-residue protein sequence, read N- to C-terminus: Sec-independent protein translocase protein TatA (62 aa).

Residues 10–32 (LLIILIIVIAIFGAGKLAGLGGA) form a helical membrane-spanning segment.

It belongs to the TatA/E family. In terms of assembly, forms a complex with TatC.

It is found in the cell membrane. Functionally, part of the twin-arginine translocation (Tat) system that transports large folded proteins containing a characteristic twin-arginine motif in their signal peptide across membranes. TatA could form the protein-conducting channel of the Tat system. The protein is Sec-independent protein translocase protein TatA of Chloroflexus aurantiacus (strain ATCC 29366 / DSM 635 / J-10-fl).